The chain runs to 396 residues: Protein NDRG1-A (396 aa).

Positions 326-396 (RSRTGSAASS…NSPKSMEVSC (71 aa)) are disordered. Positions 327-340 (SRTGSAASSSSQDG) are enriched in low complexity. 4 tandem repeats follow at residues 340–349 (GNRSRSHTNE), 350–359 (GSRSRSHTGD), 360–369 (GNRSRAHTGD), and 370–379 (GNRSRSHTDT). The segment at 340 to 379 (GNRSRSHTNEGSRSRSHTGDGNRSRAHTGDGNRSRSHTDT) is 4 X 10 AA tandem repeats of G-[NS]-R-S-R-[AS]-H-T-[DGN]-[DET]. Over residues 346–377 (HTNEGSRSRSHTGDGNRSRAHTGDGNRSRSHT) the composition is skewed to basic and acidic residues. Over residues 378–390 (DTNNINSDQNSPK) the composition is skewed to polar residues.

Belongs to the NDRG family.

Its function is as follows. May be involved in pronephros development, after specification of the pronephros. The polypeptide is Protein NDRG1-A (ndrg1-a) (Xenopus laevis (African clawed frog)).